A 147-amino-acid polypeptide reads, in one-letter code: MTYTAASLKAELNERGWRLTPQREEILRVFQNLPAGEHLSAEDLYNHLLSRNSPISLSTIYRTLKLMARMGLLRELDLAEDHKHYELNQPLKHHHHLICVSCSKTIEFKSDSVLKIGAKTSEKEGYHLLDCQLTIHGVCPTCQRSLV.

The tract at residues 1–90 (MTYTAASLKA…DHKHYELNQP (90 aa)) is DNA-binding. Positions 38 and 86 each coordinate Zn(2+). The segment at 91–147 (LKHHHHLICVSCSKTIEFKSDSVLKIGAKTSEKEGYHLLDCQLTIHGVCPTCQRSLV) is dimerization. The Fe cation site is built by His93 and His95. Positions 96, 99, 102, and 107 each coordinate Zn(2+).

The protein belongs to the Fur family. As to quaternary structure, homodimer.

Its subcellular location is the cytoplasm. Acts as a global negative controlling element, employing Fe(2+) as a cofactor to bind the operator of the repressed genes. Regulates genes involved in iron scavenging or photosynthetic electron transport. This Synechococcus elongatus (strain ATCC 33912 / PCC 7942 / FACHB-805) (Anacystis nidulans R2) protein is Ferric uptake regulation protein (fur).